Here is a 496-residue protein sequence, read N- to C-terminus: NADP-dependent glyceraldehyde-3-phosphate dehydrogenase (496 aa).

Substrate is bound by residues arginine 116 and 169 to 170 (NY). The NADP(+) site is built by lysine 192, threonine 195, and aspartate 230. Residue 245 to 249 (GGDTG) coordinates NAD(+). Glutamate 264 acts as the Proton acceptor in catalysis. 297-299 (RCT) is a binding site for substrate. The Nucleophile role is filled by cysteine 298. Position 391 (glutamate 391) interacts with NADP(+). A Phosphoserine modification is found at serine 404. Arginine 451 contacts substrate.

The protein belongs to the aldehyde dehydrogenase family. Interacts with 14-3-3 protein when phosphorylated. This interaction is released by divalent cations. Phosphorylated in shoots and non-photosynthetic tissues, but not in leaves.

The protein resides in the cytoplasm. The catalysed reaction is D-glyceraldehyde 3-phosphate + NADP(+) + H2O = (2R)-3-phosphoglycerate + NADPH + 2 H(+). Insensitive to magnesium or calcium when dephosphorylated. When phosphorylated, 3-fold activation by magnesium or calcium, 2-fold activation by potassium, inhibited by ADP and AMP and insensitive to ATP or PPi. In terms of biological role, important as a means of generating NADPH for biosynthetic reactions. The protein is NADP-dependent glyceraldehyde-3-phosphate dehydrogenase (GAPN) of Triticum aestivum (Wheat).